We begin with the raw amino-acid sequence, 145 residues long: 3-hydroxyacyl-[acyl-carrier-protein] dehydratase FabZ (145 aa).

The active site involves His52.

The protein belongs to the thioester dehydratase family. FabZ subfamily.

Its subcellular location is the cytoplasm. It catalyses the reaction a (3R)-hydroxyacyl-[ACP] = a (2E)-enoyl-[ACP] + H2O. Involved in unsaturated fatty acids biosynthesis. Catalyzes the dehydration of short chain beta-hydroxyacyl-ACPs and long chain saturated and unsaturated beta-hydroxyacyl-ACPs. This is 3-hydroxyacyl-[acyl-carrier-protein] dehydratase FabZ from Deinococcus radiodurans (strain ATCC 13939 / DSM 20539 / JCM 16871 / CCUG 27074 / LMG 4051 / NBRC 15346 / NCIMB 9279 / VKM B-1422 / R1).